A 335-amino-acid chain; its full sequence is ATP-dependent 6-phosphofructokinase (335 aa).

An ATP-binding site is contributed by Gly11. Residue 21 to 25 coordinates ADP; that stretch reads RAVVR. ATP contacts are provided by residues 72-73 and 102-105; these read RY and GDGS. Residue Asp103 participates in Mg(2+) binding. 125–127 contributes to the substrate binding site; the sequence is TID. Asp127 (proton acceptor) is an active-site residue. Arg154 serves as a coordination point for ADP. Substrate is bound by residues Arg162 and 169 to 171; that span reads MGR. ADP contacts are provided by residues 185 to 187 and 213 to 215; these read GAD and KKH. Substrate is bound by residues Glu222, Arg244, and 250-253; that span reads HIQR.

This sequence belongs to the phosphofructokinase type A (PFKA) family. ATP-dependent PFK group I subfamily. Prokaryotic clade 'B1' sub-subfamily. Homotetramer. Mg(2+) is required as a cofactor.

Its subcellular location is the cytoplasm. The catalysed reaction is beta-D-fructose 6-phosphate + ATP = beta-D-fructose 1,6-bisphosphate + ADP + H(+). Its pathway is carbohydrate degradation; glycolysis; D-glyceraldehyde 3-phosphate and glycerone phosphate from D-glucose: step 3/4. Its activity is regulated as follows. Allosterically activated by ADP and other diphosphonucleosides, and allosterically inhibited by phosphoenolpyruvate. Its function is as follows. Catalyzes the phosphorylation of D-fructose 6-phosphate to fructose 1,6-bisphosphate by ATP, the first committing step of glycolysis. This is ATP-dependent 6-phosphofructokinase from Streptococcus pneumoniae serotype 4 (strain ATCC BAA-334 / TIGR4).